The following is a 229-amino-acid chain: Coiled-coil domain-containing protein 134 (229 aa).

The N-terminal stretch at 1–22 (MDLLQFLAFLFVLLLSGMGATG) is a signal peptide. A short sequence motif (prevents secretion from ER) is located at residue Asn-148. N-linked (GlcNAc...) asparagine glycosylation occurs at Asn-148. The tract at residues 193–229 (TDPFQKALREEEKRRKKEEKRKEIRKGPRISRSQSEL) is disordered. A coiled-coil region spans residues 196 to 218 (FQKALREEEKRRKKEEKRKEIRK). The short motif at 206-213 (RRKKEEKR) is the Nuclear localization signal element.

This sequence belongs to the CCDC134 family. Interacts with TADA2A. Associates with the PCAF complex via TADA2A binding. Post-translationally, O-glycosylated, with additional sialic acid modifications. In terms of tissue distribution, expressed in cervical gland, cervical squamous epithelium, endometrium, stomach, kidney distal convoluted tubule, spermatogenic cells in testis, mammary gland, liver and striated muscle (at protein level). Also detected in placenta. Highest expression in testis relative to other tissues. Detected in T cells and dendritic cells; highly expressed in activated CD8(+) T cells, and also expressed at lower levels in CD4(+) T cells.

Its subcellular location is the endoplasmic reticulum lumen. It localises to the secreted. It is found in the cytoplasm. The protein resides in the nucleus. Molecular adapter required to prevent protein hyperglycosylation of HSP90B1: during translation, associates with nascent HSP90B1 and the STT3A catalytic component of the OST-A complex and tethers them to a specialized translocon that forms a microenvironment for HSP90B1 folding. In the CCDC134-containing translocon, STT3A associates with the SRT pseudosubstrate motif of HSP90B1, preventing access to facultative glycosylation sites until folding is completed, preventing hyperglycosylation and subsequent degradation of HSP90B1. In extracellular secreted form, promotes proliferation and activation of CD8(+) T-cells, suggesting a cytokine-like function. May inhibit ERK and JNK signaling activity. May suppress cell migration and invasion activity, via its effects on ERK and JNK signaling. May also localize in the nucleus: enhances stability of the PCAF histone acetyltransferase (HAT) complex member TADA2A and thus promotes PCAF-mediated histone acetyltransferase activity. Has a critical role in the regulation of osteogenesis and bone development. The chain is Coiled-coil domain-containing protein 134 from Homo sapiens (Human).